Reading from the N-terminus, the 48-residue chain is Large ribosomal subunit protein bL33B (48 aa).

Belongs to the bacterial ribosomal protein bL33 family.

In Streptococcus thermophilus (strain CNRZ 1066), this protein is Large ribosomal subunit protein bL33B.